A 372-amino-acid chain; its full sequence is 3-dehydroquinate synthase (372 aa).

NAD(+) is bound by residues 116 to 120 (GVVGD), 140 to 141 (TT), Lys-153, Lys-162, and 180 to 183 (TLNT). Zn(2+) is bound by residues Glu-195, His-260, and His-277.

It belongs to the sugar phosphate cyclases superfamily. Dehydroquinate synthase family. Requires Co(2+) as cofactor. The cofactor is Zn(2+). It depends on NAD(+) as a cofactor.

It localises to the cytoplasm. The enzyme catalyses 7-phospho-2-dehydro-3-deoxy-D-arabino-heptonate = 3-dehydroquinate + phosphate. The protein operates within metabolic intermediate biosynthesis; chorismate biosynthesis; chorismate from D-erythrose 4-phosphate and phosphoenolpyruvate: step 2/7. Functionally, catalyzes the conversion of 3-deoxy-D-arabino-heptulosonate 7-phosphate (DAHP) to dehydroquinate (DHQ). This Prochlorococcus marinus (strain MIT 9303) protein is 3-dehydroquinate synthase.